We begin with the raw amino-acid sequence, 431 residues long: Glutamyl-tRNA(Gln) amidotransferase subunit A (431 aa).

Residues lysine 55 and serine 130 each act as charge relay system in the active site. Serine 154 serves as the catalytic Acyl-ester intermediate.

This sequence belongs to the amidase family. GatA subfamily. As to quaternary structure, heterotrimer of A, B and C subunits.

It catalyses the reaction L-glutamyl-tRNA(Gln) + L-glutamine + ATP + H2O = L-glutaminyl-tRNA(Gln) + L-glutamate + ADP + phosphate + H(+). Functionally, allows the formation of correctly charged Gln-tRNA(Gln) through the transamidation of misacylated Glu-tRNA(Gln) in organisms which lack glutaminyl-tRNA synthetase. The reaction takes place in the presence of glutamine and ATP through an activated gamma-phospho-Glu-tRNA(Gln). This is Glutamyl-tRNA(Gln) amidotransferase subunit A from Methanococcus maripaludis (strain C5 / ATCC BAA-1333).